A 506-amino-acid chain; its full sequence is Aerotaxis receptor (506 aa).

Topologically, residues 1 to 166 are cytoplasmic; the sequence is MSSHPYVTQQ…PSLPLRWRAR (166 aa). A helical transmembrane segment spans residues 167 to 186; it reads GVMTLMFILLAAMLWFVAAP. Over 187 to 190 the chain is Periplasmic; sequence VVTY. Residues 191-209 traverse the membrane as a helical segment; it reads ILCALVVLLASACFEWQIV. At 210 to 506 the chain is on the cytoplasmic side; sequence RPIENVAHQA…RLEDAVTVLH (297 aa). In terms of domain architecture, Methyl-accepting transducer spans 263 to 492; it reads QVSSVRNGSE…ESAQVSAMVK (230 aa).

The protein belongs to the methyl-accepting chemotaxis (MCP) protein family.

It localises to the cell inner membrane. Signal transducer for aerotaxis. The aerotactic response is the accumulation of cells around air bubbles. The nature of the sensory stimulus detected by this protein is the proton motive force or cellular redox state. It uses a FAD prosthetic group as a redox sensor to monitor oxygen levels. The polypeptide is Aerotaxis receptor (aer) (Escherichia coli (strain K12)).